A 284-amino-acid polypeptide reads, in one-letter code: MKACGFDIGLEHPFFLIAGPCVIESRELAFDTAGRLKEITSRLGIPFIYKSSFDKANRSSGKSFRGLGIDEGLKILADVRDQVGVPVLTDVHETEQVEPVAAVVDMLQTPAFLCRQTDFIRACAASLKPVNIKKGQFLAPHDMVQVAQKARDAAIEAGGDGSNILVCERGASFGYNNLVSDMRSLAIMRETGCPVVFDATHSVQLPGGQGTSSGGQREFVPVLARAAVAVGVSGLFMETHPNPACALSDGPNAVPLDLMPALLESLVELDRVTKRNGFVENQFI.

The protein belongs to the KdsA family.

It is found in the cytoplasm. The catalysed reaction is D-arabinose 5-phosphate + phosphoenolpyruvate + H2O = 3-deoxy-alpha-D-manno-2-octulosonate-8-phosphate + phosphate. It functions in the pathway carbohydrate biosynthesis; 3-deoxy-D-manno-octulosonate biosynthesis; 3-deoxy-D-manno-octulosonate from D-ribulose 5-phosphate: step 2/3. Its pathway is bacterial outer membrane biogenesis; lipopolysaccharide biosynthesis. This Bordetella petrii (strain ATCC BAA-461 / DSM 12804 / CCUG 43448) protein is 2-dehydro-3-deoxyphosphooctonate aldolase.